Reading from the N-terminus, the 383-residue chain is Plant intracellular Ras-group-related LRR protein 8 (383 aa).

10 LRR repeats span residues 56–79 (RQNI…SINL), 80–102 (ASIS…LVAR), 104–126 (LNLW…IGCL), 127–149 (SKLK…IEDC), 151–173 (SLEE…GFEL), 174–197 (TNLT…SYLT), 199–219 (LRVL…LENL), 221–244 (NLQV…VGLL), 245–268 (ISLV…GCLR), and 270–290 (IQKL…VVEQ). A GVYW; degenerate motif is present at residues 291 to 298 (GLEALKQY).

This sequence belongs to the SHOC2 family. Widely expressed except flowers.

In terms of biological role, leucine-rich repeat protein that likely mediates protein interactions, possibly in the context of signal transduction. This chain is Plant intracellular Ras-group-related LRR protein 8 (PIRL8), found in Arabidopsis thaliana (Mouse-ear cress).